Reading from the N-terminus, the 402-residue chain is Pyridinium-3,5-bisthiocarboxylic acid mononucleotide nickel insertion protein (402 aa).

It belongs to the LarC family.

The enzyme catalyses Ni(II)-pyridinium-3,5-bisthiocarboxylate mononucleotide = pyridinium-3,5-bisthiocarboxylate mononucleotide + Ni(2+). Functionally, involved in the biosynthesis of a nickel-pincer cofactor ((SCS)Ni(II) pincer complex). Binds Ni(2+), and functions in nickel delivery to pyridinium-3,5-bisthiocarboxylic acid mononucleotide (P2TMN), to form the mature cofactor. Is thus probably required for the activation of nickel-pincer cofactor-dependent enzymes. This Desulfitobacterium hafniense (strain DSM 10664 / DCB-2) protein is Pyridinium-3,5-bisthiocarboxylic acid mononucleotide nickel insertion protein.